We begin with the raw amino-acid sequence, 367 residues long: Germination protease (367 aa).

A propeptide spanning residues 1–15 is cleaved from the precursor; sequence MKEPLDLSKYSVRTD.

The protein belongs to the peptidase A25 family. As to quaternary structure, homotetramer. Autoproteolytically processed. The inactive tetrameric zymogen termed p46 autoprocesses to a smaller form termed p41, which is active only during spore germination.

It carries out the reaction Endopeptidase action with P4 Glu or Asp, P1 preferably Glu &gt; Asp, P1' hydrophobic and P2' Ala.. Initiates the rapid degradation of small, acid-soluble proteins during spore germination. The chain is Germination protease from Bacillus mycoides (strain KBAB4) (Bacillus weihenstephanensis).